The chain runs to 178 residues: Crossover junction endodeoxyribonuclease RuvC (178 aa).

Catalysis depends on residues Asp-20, Glu-80, and Asp-154. Asp-20, Glu-80, and Asp-154 together coordinate Mg(2+).

It belongs to the RuvC family. Homodimer which binds Holliday junction (HJ) DNA. The HJ becomes 2-fold symmetrical on binding to RuvC with unstacked arms; it has a different conformation from HJ DNA in complex with RuvA. In the full resolvosome a probable DNA-RuvA(4)-RuvB(12)-RuvC(2) complex forms which resolves the HJ. Mg(2+) serves as cofactor.

The protein localises to the cytoplasm. It carries out the reaction Endonucleolytic cleavage at a junction such as a reciprocal single-stranded crossover between two homologous DNA duplexes (Holliday junction).. The RuvA-RuvB-RuvC complex processes Holliday junction (HJ) DNA during genetic recombination and DNA repair. Endonuclease that resolves HJ intermediates. Cleaves cruciform DNA by making single-stranded nicks across the HJ at symmetrical positions within the homologous arms, yielding a 5'-phosphate and a 3'-hydroxyl group; requires a central core of homology in the junction. The consensus cleavage sequence is 5'-(A/T)TT(C/G)-3'. Cleavage occurs on the 3'-side of the TT dinucleotide at the point of strand exchange. HJ branch migration catalyzed by RuvA-RuvB allows RuvC to scan DNA until it finds its consensus sequence, where it cleaves and resolves the cruciform DNA. This is Crossover junction endodeoxyribonuclease RuvC from Rhodopirellula baltica (strain DSM 10527 / NCIMB 13988 / SH1).